We begin with the raw amino-acid sequence, 365 residues long: Aminomethyltransferase (365 aa).

It belongs to the GcvT family. In terms of assembly, the glycine cleavage system is composed of four proteins: P, T, L and H.

The enzyme catalyses N(6)-[(R)-S(8)-aminomethyldihydrolipoyl]-L-lysyl-[protein] + (6S)-5,6,7,8-tetrahydrofolate = N(6)-[(R)-dihydrolipoyl]-L-lysyl-[protein] + (6R)-5,10-methylene-5,6,7,8-tetrahydrofolate + NH4(+). Its function is as follows. The glycine cleavage system catalyzes the degradation of glycine. This Yersinia pseudotuberculosis serotype O:1b (strain IP 31758) protein is Aminomethyltransferase.